A 247-amino-acid polypeptide reads, in one-letter code: Probable transcriptional regulatory protein Dvul_0986 (247 aa).

Residues 1–22 are disordered; it reads MAGHSKWANIQHRKGRQDAKRG.

It belongs to the TACO1 family.

Its subcellular location is the cytoplasm. This is Probable transcriptional regulatory protein Dvul_0986 from Nitratidesulfovibrio vulgaris (strain DP4) (Desulfovibrio vulgaris).